A 91-amino-acid polypeptide reads, in one-letter code: Small ribosomal subunit protein uS19 (91 aa).

It belongs to the universal ribosomal protein uS19 family.

Its function is as follows. Protein S19 forms a complex with S13 that binds strongly to the 16S ribosomal RNA. The protein is Small ribosomal subunit protein uS19 of Pseudomonas putida (strain ATCC 700007 / DSM 6899 / JCM 31910 / BCRC 17059 / LMG 24140 / F1).